A 133-amino-acid chain; its full sequence is Fatty acid-binding protein, heart (133 aa).

Ala-2 is modified (N-acetylalanine). The residue at position 8 (Thr-8) is a Phosphothreonine. At Tyr-20 the chain carries Phosphotyrosine; by Tyr-kinases. Ser-23 carries the post-translational modification Phosphoserine. Thr-30 carries the phosphothreonine modification. Position 83 is a phosphoserine (Ser-83). Residue Arg-127–Tyr-129 participates in (9Z)-octadecenoate binding. Arg-127–Tyr-129 contributes to the hexadecanoate binding site. Arg-127–Tyr-129 is a binding site for octadecanoate.

The protein belongs to the calycin superfamily. Fatty-acid binding protein (FABP) family.

It localises to the cytoplasm. FABPs are thought to play a role in the intracellular transport of long-chain fatty acids and their acyl-CoA esters. The chain is Fatty acid-binding protein, heart (Fabp3) from Mus musculus (Mouse).